The chain runs to 519 residues: Acetylcholine receptor subunit gamma (519 aa).

The signal sequence occupies residues 1 to 22 (MQGGQRPHLLLLLLAVCLGAQS). Over 23-240 (RNQEERLLAD…VVFYLLIQRK (218 aa)) the chain is Extracellular. 2 N-linked (GlcNAc...) asparagine glycosylation sites follow: Asn52 and Asn163. Cys150 and Cys164 are disulfide-bonded. 3 consecutive transmembrane segments (helical) span residues 241-265 (PLFYVINIIAPCVLISSVAILIYFL), 274-292 (CTVATNVLLAQTVFLFLVA), and 308-329 (YLTFLMVVTILIVVNSVVVLNV). Over 330-476 (SLRSPHTHSM…WLLVGRVLDR (147 aa)) the chain is Cytoplasmic. Residues 477 to 497 (VCFLAMLSLFICGTAGIFLMA) traverse the membrane as a helical segment.

The protein belongs to the ligand-gated ion channel (TC 1.A.9) family. Acetylcholine receptor (TC 1.A.9.1) subfamily. Gamma/CHRNG sub-subfamily. Pentamer of two alpha chains, and one each of the beta, delta, and gamma (in immature muscle) or epsilon (in mature muscle) chains. At least in myotubes of skeletal muscle.

It is found in the postsynaptic cell membrane. The protein localises to the cell membrane. It catalyses the reaction K(+)(in) = K(+)(out). The catalysed reaction is Na(+)(in) = Na(+)(out). After binding acetylcholine, the AChR responds by an extensive change in conformation that affects all subunits and leads to opening of an ion-conducting channel across the plasma membrane. The polypeptide is Acetylcholine receptor subunit gamma (Chrng) (Mus musculus (Mouse)).